Reading from the N-terminus, the 504-residue chain is Dimethylsulfoniopropionate lyase 5 (504 aa).

This sequence belongs to the aspartate/glutamate racemases family. ALMA1 subfamily. As to quaternary structure, homotetramer.

The catalysed reaction is S,S-dimethyl-beta-propiothetin = acrylate + dimethyl sulfide + H(+). In terms of biological role, mediates cleavage of dimethylsulfoniopropionate (DMSP) into dimethyl sulfide (DMS) and acrylate. DMS is the principal form by which sulfur is transported from oceans to the atmosphere and is a key component of the ocean sulfur cycle. In Emiliania huxleyi (strain CCMP1516), this protein is Dimethylsulfoniopropionate lyase 5.